The primary structure comprises 369 residues: Forkhead box protein I2-A (369 aa).

Residues 124 to 218 constitute a DNA-binding region (fork-head); the sequence is RPPYSYSSLI…DNGNFRRKRK (95 aa). Positions 215 to 252 are disordered; it reads RKRKRKSESVGAGFDEDSNEDKKPLALKSLGSDSPQGA.

In terms of tissue distribution, localized to the animal hemisphere of early cleavage stage embryos. Zygotic expression is restricted to the dorsal part of the epibranchial placodes of the head within a region located near the tip of the first, second and third visceral pouch.

It is found in the nucleus. Possible transcriptional activator. The chain is Forkhead box protein I2-A (foxi2-a) from Xenopus laevis (African clawed frog).